We begin with the raw amino-acid sequence, 262 residues long: Imidazole glycerol phosphate synthase subunit HisF (262 aa).

Residues Asp11 and Asp130 contribute to the active site.

Belongs to the HisA/HisF family. In terms of assembly, heterodimer of HisH and HisF.

It localises to the cytoplasm. It catalyses the reaction 5-[(5-phospho-1-deoxy-D-ribulos-1-ylimino)methylamino]-1-(5-phospho-beta-D-ribosyl)imidazole-4-carboxamide + L-glutamine = D-erythro-1-(imidazol-4-yl)glycerol 3-phosphate + 5-amino-1-(5-phospho-beta-D-ribosyl)imidazole-4-carboxamide + L-glutamate + H(+). The protein operates within amino-acid biosynthesis; L-histidine biosynthesis; L-histidine from 5-phospho-alpha-D-ribose 1-diphosphate: step 5/9. In terms of biological role, IGPS catalyzes the conversion of PRFAR and glutamine to IGP, AICAR and glutamate. The HisF subunit catalyzes the cyclization activity that produces IGP and AICAR from PRFAR using the ammonia provided by the HisH subunit. This is Imidazole glycerol phosphate synthase subunit HisF from Rhodopirellula baltica (strain DSM 10527 / NCIMB 13988 / SH1).